Consider the following 144-residue polypeptide: Large ribosomal subunit protein uL11 (144 aa).

It belongs to the universal ribosomal protein uL11 family. Part of the ribosomal stalk of the 50S ribosomal subunit. Interacts with L10 and the large rRNA to form the base of the stalk. L10 forms an elongated spine to which L12 dimers bind in a sequential fashion forming a multimeric L10(L12)X complex. One or more lysine residues are methylated.

In terms of biological role, forms part of the ribosomal stalk which helps the ribosome interact with GTP-bound translation factors. The chain is Large ribosomal subunit protein uL11 from Deinococcus deserti (strain DSM 17065 / CIP 109153 / LMG 22923 / VCD115).